The primary structure comprises 720 residues: MGSTSQEILKSFCFNTDWDYAVFWQLNHRGSRMVLTLEDAYYDHHGTNMHGAHDPLGLAVAKMSYHVYSLGEGIVGQVAVSGEHQWVFPENYNNCNSAFEFHNVWESQISAGIKTILVVAVGPCGVVQLGSLCKVNEDVNFVNHIRHLFLALRDPLADHAANLRQCNMNNSLCLPKMPSEGLHAEAFPDCSGEVDKAMDVEESNILTQYKTRRSDSMPYNTPSSCLVMEKAAQVVGGREVVQGSTCGSYSGVTFGFPVDLVGAKHENQVGTNIIRDAPHVGMTSGCKDSRDLDPNLHLYMKNHVLNDTSTSALAIEAERLITSQSYPRLDSTFQATSRTDKESSYHNEVFQLSENQGNKYIKETERMLGRNCESSQFDALISSGYTFAGSELLEALGSAFKQTNTGQEELLKSEHGSTMRPTDDMSHSQLTFDPGPENLLDAVVANVCQRDGNARDDMMSSRSVQSLLTNMELAEPSGQKKHNIVNPINSAMNQPPMAEVDTQQNSSDICGAFSSIGFSSTYPSSSSDQFQTSLDIPKKNKKRAKPGESSRPRPRDRQLIQDRIKELRELVPNGSKCSIDSLLERTIKHMLFLQNVTKHAEKLSKSANEKMQQKETGMQGSSCAVEVGGHLQVSSIIVENLNKQGMVLIEMLCEECGHFLEIANVIRSLDLVILRGFTETQGEKTWICFVTESQNSKVMQRMDILWSLVQIFQPKANEKG.

A compositionally biased stretch (polar residues) spans 522–534 (YPSSSSDQFQTSL). The interval 522 to 558 (YPSSSSDQFQTSLDIPKKNKKRAKPGESSRPRPRDRQ) is disordered. A Nuclear localization signal motif is present at residues 540-547 (NKKRAKPG). Residues 544–593 (AKPGESSRPRPRDRQLIQDRIKELRELVPNGSKCSIDSLLERTIKHMLFL) enclose the bHLH domain. The segment covering 545-558 (KPGESSRPRPRDRQ) has biased composition (basic and acidic residues).

This sequence belongs to the bHLH protein family. LHW subfamily. In terms of assembly, homodimer.

It localises to the nucleus. Transcription factor that may regulate root development. In Arabidopsis thaliana (Mouse-ear cress), this protein is Transcription factor bHLH155 (BHLH155).